The primary structure comprises 224 residues: Thiamine-phosphate synthase (224 aa).

4-amino-2-methyl-5-(diphosphooxymethyl)pyrimidine contacts are provided by residues 41 to 45 (QFRDK) and Asp-77. Asp-78 and Asp-97 together coordinate Mg(2+). Ser-116 is a binding site for 4-amino-2-methyl-5-(diphosphooxymethyl)pyrimidine. Residue 143-145 (TNS) coordinates 2-[(2R,5Z)-2-carboxy-4-methylthiazol-5(2H)-ylidene]ethyl phosphate. Residue Lys-146 participates in 4-amino-2-methyl-5-(diphosphooxymethyl)pyrimidine binding. 2-[(2R,5Z)-2-carboxy-4-methylthiazol-5(2H)-ylidene]ethyl phosphate-binding positions include Gly-174 and 194–195 (IS).

This sequence belongs to the thiamine-phosphate synthase family. Mg(2+) is required as a cofactor.

It catalyses the reaction 2-[(2R,5Z)-2-carboxy-4-methylthiazol-5(2H)-ylidene]ethyl phosphate + 4-amino-2-methyl-5-(diphosphooxymethyl)pyrimidine + 2 H(+) = thiamine phosphate + CO2 + diphosphate. The enzyme catalyses 2-(2-carboxy-4-methylthiazol-5-yl)ethyl phosphate + 4-amino-2-methyl-5-(diphosphooxymethyl)pyrimidine + 2 H(+) = thiamine phosphate + CO2 + diphosphate. The catalysed reaction is 4-methyl-5-(2-phosphooxyethyl)-thiazole + 4-amino-2-methyl-5-(diphosphooxymethyl)pyrimidine + H(+) = thiamine phosphate + diphosphate. It functions in the pathway cofactor biosynthesis; thiamine diphosphate biosynthesis; thiamine phosphate from 4-amino-2-methyl-5-diphosphomethylpyrimidine and 4-methyl-5-(2-phosphoethyl)-thiazole: step 1/1. In terms of biological role, condenses 4-methyl-5-(beta-hydroxyethyl)thiazole monophosphate (THZ-P) and 2-methyl-4-amino-5-hydroxymethyl pyrimidine pyrophosphate (HMP-PP) to form thiamine monophosphate (TMP). This is Thiamine-phosphate synthase from Latilactobacillus sakei subsp. sakei (strain 23K) (Lactobacillus sakei subsp. sakei).